Here is a 555-residue protein sequence, read N- to C-terminus: Glucose-6-phosphate isomerase (555 aa).

Glu-360 functions as the Proton donor in the catalytic mechanism. Active-site residues include His-391 and Lys-519.

Belongs to the GPI family.

It is found in the cytoplasm. The enzyme catalyses alpha-D-glucose 6-phosphate = beta-D-fructose 6-phosphate. It functions in the pathway carbohydrate biosynthesis; gluconeogenesis. Its pathway is carbohydrate degradation; glycolysis; D-glyceraldehyde 3-phosphate and glycerone phosphate from D-glucose: step 2/4. Functionally, catalyzes the reversible isomerization of glucose-6-phosphate to fructose-6-phosphate. The chain is Glucose-6-phosphate isomerase from Acinetobacter baumannii (strain AB307-0294).